Here is a 321-residue protein sequence, read N- to C-terminus: Tetraketide alpha-pyrone reductase 2 (321 aa).

N-acetylserine is present on serine 2. NADP(+) is bound by residues 4 to 28 (YLVTGGTGFIASYIIKSLLELGHTV), lysine 40, and tyrosine 160.

The protein belongs to the NAD(P)-dependent epimerase/dehydratase family. Dihydroflavonol-4-reductase subfamily.

The protein resides in the cytoplasm. In terms of biological role, may be involved in the biosynthesis of hydroxylated tetraketide compounds that serve as sporopollenin precursors (the main constituents of exine). Acts on tetraketide alpha-pyrones and reduces the carbonyl function on the tetraketide alkyl chain to a secondary alcohol function. In Arabidopsis thaliana (Mouse-ear cress), this protein is Tetraketide alpha-pyrone reductase 2 (TKPR2).